We begin with the raw amino-acid sequence, 363 residues long: Aminomethyltransferase (363 aa).

Belongs to the GcvT family. As to quaternary structure, the glycine cleavage system is composed of four proteins: P, T, L and H.

It catalyses the reaction N(6)-[(R)-S(8)-aminomethyldihydrolipoyl]-L-lysyl-[protein] + (6S)-5,6,7,8-tetrahydrofolate = N(6)-[(R)-dihydrolipoyl]-L-lysyl-[protein] + (6R)-5,10-methylene-5,6,7,8-tetrahydrofolate + NH4(+). Its function is as follows. The glycine cleavage system catalyzes the degradation of glycine. The protein is Aminomethyltransferase of Nitrosomonas europaea (strain ATCC 19718 / CIP 103999 / KCTC 2705 / NBRC 14298).